The following is an 876-amino-acid chain: MAKSAQGRKKEPTPMMRQYLEVKERYPEYVLLFRVGDFYETFLDDAVTVSAALNIVLTKRSNGSAGEIPLAGFPHHASEGYIAKLVTKGFKVAVCDQVEDPALAKGIVKREITDIVTPGITYSDKILDDRHNNYLCAVALFKRGREHLAGVAFVDVTTAEFRMTELPVAELKDFLQSLHPSEILISSRDKELRDSLAKSMNTLFTVLDEWMFSAEQASQVLENHFKTHSLKGFGIDGVEGGRIAAGAILQYLEEAKQGSLKYLVRIGLVESAETMTLDIQTRRNLEIISSMQDGSLNGSLLEVIDRTKNPMGARLLRRWLLHPLRKLEAVVQRHDAVEELLESDSMREESRQLLGGIIDLERALARIATSRAMPREVRLLGSSFALIPQLKAMLASCEAQRLRHLADRLDSLPELAETIERALDPEASGTLRDGGYIRAGYHEELDELRAISSGARDRLLEIQQAERSKTSISTLKVQYNKVFGYYIEVSRANSDKVPEYYEKKQTLVNAERYTIPALKEYEEKILTAEEKSQFLEHRLFQELCAAVAAEAASIQKTAAALAELDCLACFASCADEYRYCRPAMNEGTELSITGGRHPVLERILGADEPYVANDCRVGSDQQLLIITGPNMAGKSSYLRQAGLVVLLAQVGSFVPAESAEIGLVDRIFTRVGASDNLTSGESTFLVEMNEAASILNNATERSLLLLDEIGRGTSTFDGMSIAWSMCEFIHDRLRARTLFATHYHELAELESRFERIVNFNATVVETADTVIFLRKIVRGASDNSYGIEVAKMAGMPPEVIERAREILAGMERREVEVPTQREAPPRVVSQQISLFEEEESRLRKALSGIDINRLTPLDAMMELKRLQDIALGKSKA.

Residue glycine 628–serine 635 participates in ATP binding.

This sequence belongs to the DNA mismatch repair MutS family.

This protein is involved in the repair of mismatches in DNA. It is possible that it carries out the mismatch recognition step. This protein has a weak ATPase activity. The protein is DNA mismatch repair protein MutS of Chlorobaculum parvum (strain DSM 263 / NCIMB 8327) (Chlorobium vibrioforme subsp. thiosulfatophilum).